A 274-amino-acid chain; its full sequence is MREGDSNSKKSADVAVLSIILTGSTLTLIYTYKRYLTQFKRTNDIPRRIFRKHWLYGKVTSVGDGDNFHFFHMPGGIRGGWGWLRPVPQMIKNDSTAEKLVGDSRNMRFFNFNWITHGRSTKSKIQKAKSQFLKLNVPYKNRKNLPTIPIRLCGIDAPERAHFGNPAQPFGNEALIWLQNRILGKKVWVKPLSIDQYNRCVARVSYWDWFGGWKDLSLEMLKDGLAVVYEGKVNTEFDDREDKYRYYEFLARSRKKGLWIQNKFETPGEYKKRI.

Residues 15–32 (AVLSIILTGSTLTLIYTY) form a helical membrane-spanning segment. The TNase-like domain maps to 53 to 261 (HWLYGKVTSV…RSRKKGLWIQ (209 aa)). The active site involves R151. Position 156 (D156) interacts with Ca(2+). Catalysis depends on residues E159 and R199.

The protein belongs to the LCL3 family.

It localises to the mitochondrion. The protein resides in the membrane. This is Probable endonuclease LCL3 (LCL3) from Saccharomyces cerevisiae (strain RM11-1a) (Baker's yeast).